A 166-amino-acid polypeptide reads, in one-letter code: Endoribonuclease YbeY (166 aa).

H132, H136, and H142 together coordinate Zn(2+).

This sequence belongs to the endoribonuclease YbeY family. It depends on Zn(2+) as a cofactor.

The protein localises to the cytoplasm. In terms of biological role, single strand-specific metallo-endoribonuclease involved in late-stage 70S ribosome quality control and in maturation of the 3' terminus of the 16S rRNA. The sequence is that of Endoribonuclease YbeY from Clostridium botulinum (strain Alaska E43 / Type E3).